Here is a 195-residue protein sequence, read N- to C-terminus: Thioredoxin reductase-like selenoprotein T (195 aa).

Positions 1–19 are cleaved as a signal peptide; the sequence is MRLLLLLLVAASAMVRSEA. A cross-link (cysteinyl-selenocysteine (Cys-Sec)) is located at residues 46 to 49; the sequence is CVSU. Residue U49 is a non-standard amino acid, selenocysteine. A helical transmembrane segment spans residues 85–103; it reads IASFLSVFKLVLIGLIIVG.

The protein belongs to the SelWTH family. Selenoprotein T subfamily. May contain a selenide-sulfide bond between Cys-46 and Sec-49. This bond is speculated to serve as redox-active pair. As to expression, ubiquitous. Highly expressed in the endocrine pancreas.

It localises to the endoplasmic reticulum membrane. The catalysed reaction is [thioredoxin]-dithiol + NADP(+) = [thioredoxin]-disulfide + NADPH + H(+). Its function is as follows. Selenoprotein with thioredoxin reductase-like oxidoreductase activity. Protects dopaminergic neurons against oxidative stress and cell death. Involved in ADCYAP1/PACAP-induced calcium mobilization and neuroendocrine secretion. Plays a role in fibroblast anchorage and redox regulation. In gastric smooth muscle, modulates the contraction processes through the regulation of calcium release and MYLK activation. In pancreatic islets, involved in the control of glucose homeostasis, contributes to prolonged ADCYAP1/PACAP-induced insulin secretion. In Homo sapiens (Human), this protein is Thioredoxin reductase-like selenoprotein T.